Here is a 212-residue protein sequence, read N- to C-terminus: 3-isopropylmalate dehydratase small subunit (212 aa).

It belongs to the LeuD family. LeuD type 1 subfamily. Heterodimer of LeuC and LeuD.

It catalyses the reaction (2R,3S)-3-isopropylmalate = (2S)-2-isopropylmalate. It participates in amino-acid biosynthesis; L-leucine biosynthesis; L-leucine from 3-methyl-2-oxobutanoate: step 2/4. Catalyzes the isomerization between 2-isopropylmalate and 3-isopropylmalate, via the formation of 2-isopropylmaleate. The chain is 3-isopropylmalate dehydratase small subunit from Laribacter hongkongensis (strain HLHK9).